Consider the following 424-residue polypeptide: Serine--tRNA ligase (424 aa).

230-232 (TAE) contributes to the L-serine binding site. 261-263 (RSE) lines the ATP pocket. An L-serine-binding site is contributed by E284. Position 348–351 (348–351 (EISS)) interacts with ATP. S384 is an L-serine binding site.

Belongs to the class-II aminoacyl-tRNA synthetase family. Type-1 seryl-tRNA synthetase subfamily. As to quaternary structure, homodimer. The tRNA molecule binds across the dimer.

The protein localises to the cytoplasm. It catalyses the reaction tRNA(Ser) + L-serine + ATP = L-seryl-tRNA(Ser) + AMP + diphosphate + H(+). The catalysed reaction is tRNA(Sec) + L-serine + ATP = L-seryl-tRNA(Sec) + AMP + diphosphate + H(+). Its pathway is aminoacyl-tRNA biosynthesis; selenocysteinyl-tRNA(Sec) biosynthesis; L-seryl-tRNA(Sec) from L-serine and tRNA(Sec): step 1/1. In terms of biological role, catalyzes the attachment of serine to tRNA(Ser). Is also able to aminoacylate tRNA(Sec) with serine, to form the misacylated tRNA L-seryl-tRNA(Sec), which will be further converted into selenocysteinyl-tRNA(Sec). The sequence is that of Serine--tRNA ligase from Streptococcus pneumoniae serotype 4 (strain ATCC BAA-334 / TIGR4).